We begin with the raw amino-acid sequence, 296 residues long: Probable endonuclease 4 (296 aa).

Histidine 68, histidine 109, glutamate 144, aspartate 178, histidine 181, histidine 213, aspartate 226, histidine 228, and glutamate 258 together coordinate Zn(2+).

The protein belongs to the AP endonuclease 2 family. Requires Zn(2+) as cofactor.

It carries out the reaction Endonucleolytic cleavage to 5'-phosphooligonucleotide end-products.. Endonuclease IV plays a role in DNA repair. It cleaves phosphodiester bonds at apurinic or apyrimidinic (AP) sites, generating a 3'-hydroxyl group and a 5'-terminal sugar phosphate. The polypeptide is Probable endonuclease 4 (Staphylococcus aureus (strain NCTC 8325 / PS 47)).